Reading from the N-terminus, the 291-residue chain is Acetyl-coenzyme A carboxylase carboxyl transferase subunit beta (291 aa).

Residues 23–291 (VWHKCPSCTA…PPDLPVEESV (269 aa)) enclose the CoA carboxyltransferase N-terminal domain. 4 residues coordinate Zn(2+): C27, C30, C46, and C49. A C4-type zinc finger spans residues 27–49 (CPSCTAVLYRVELERNLEVCPKC).

It belongs to the AccD/PCCB family. Acetyl-CoA carboxylase is a heterohexamer composed of biotin carboxyl carrier protein (AccB), biotin carboxylase (AccC) and two subunits each of ACCase subunit alpha (AccA) and ACCase subunit beta (AccD). The cofactor is Zn(2+).

It is found in the cytoplasm. The enzyme catalyses N(6)-carboxybiotinyl-L-lysyl-[protein] + acetyl-CoA = N(6)-biotinyl-L-lysyl-[protein] + malonyl-CoA. It functions in the pathway lipid metabolism; malonyl-CoA biosynthesis; malonyl-CoA from acetyl-CoA: step 1/1. Functionally, component of the acetyl coenzyme A carboxylase (ACC) complex. Biotin carboxylase (BC) catalyzes the carboxylation of biotin on its carrier protein (BCCP) and then the CO(2) group is transferred by the transcarboxylase to acetyl-CoA to form malonyl-CoA. This is Acetyl-coenzyme A carboxylase carboxyl transferase subunit beta from Coxiella burnetii (strain RSA 331 / Henzerling II).